Consider the following 292-residue polypeptide: Potassium channel, subfamily K, member 16 (292 aa).

At Met-1–Gln-13 the chain is on the cytoplasmic side. A helical membrane pass occupies residues Val-14 to Leu-34. The pore-forming intramembrane region spans Ser-98–Pro-116. Positions 108, 109, 110, and 111 each coordinate K(+). The tract at residues Thr-108–Asn-113 is selectivity filter 1. A helical membrane pass occupies residues Ala-120–Leu-140. The Cytoplasmic portion of the chain corresponds to Asn-141–Gln-165. A helical membrane pass occupies residues Leu-166–Phe-186. The pore-forming intramembrane region spans Gly-202–Gly-221. The K(+) site is built by Thr-212, Ile-213, Gly-214, and Phe-215. Residues Thr-212–Asp-217 are selectivity filter 2. The helical transmembrane segment at Ile-238–Leu-258 threads the bilayer. Residues His-259–Ala-292 are Cytoplasmic-facing.

Belongs to the two pore domain potassium channel (TC 1.A.1.8) family. As to quaternary structure, homodimer; disulfide-linked. Heterodimer with KCNK17 and KCNK5. As to expression, expressed in pacreatic beta-cells (at protein level). Expressed in pacreatic delta-cells (at protein level).

It is found in the cell membrane. The protein localises to the endoplasmic reticulum membrane. Its subcellular location is the mitochondrion inner membrane. It catalyses the reaction K(+)(in) = K(+)(out). The catalysed reaction is Rb(+)(in) = Rb(+)(out). It carries out the reaction Cs(+)(in) = Cs(+)(out). In terms of biological role, k(+) channel that conducts voltage-dependent outward rectifying currents upon membrane depolarization. Voltage sensing is coupled to K(+) electrochemical gradient in an 'ion flux gating' mode where outward but not inward ion flow opens the gate. Homo- and heterodimerizes to form functional channels with distinct regulatory and gating properties. In pancreatic islets, conducts K(+) countercurrents for Ca(2+) release from the endoplasmic reticulum (ER) and regulates the frequency and duration of cytosolic Ca(2+) oscillations coupled to secretion of pancreatic hormones. In pancreatic beta cells, drives ER Ca(2+) efflux, which in turn activates Ca(2+)-dependent plasma membrane K(+) slow currents and cytosolic Ca(2+) influx, overall contributing to synchronous cytosolic Ca(2+) oscillations. Limits glucose-induced cytosolic Ca(2+) oscillations coupled to second-phase INS secretion. Contributes to beta cell adaptation to acute inflammation by maintaining normal cytosolic Ca(2+) levels and INS secretion. May regulate beta cell mitochondrial Ca(2+) levels either indirectly via ER Ca(2+) efflux or directly by hyperpolarizing the mitochondrial membrane potential. Limits mitochondrial Ca(2+) oscillations and ATP production involved in glucose homeostasis upon metabolic stress. In pancreatic delta cells, limits Ca(2+)-induced Ca(2+)-release involved in somatostatin secretion and modulates islet paracrine signaling involved in glucagon secretion. Permeable to other monovalent cations such as Rb(+) and Cs(+). The chain is Potassium channel, subfamily K, member 16 from Mus musculus (Mouse).